Here is a 388-residue protein sequence, read N- to C-terminus: MKHLHRFFSSDASGGIILIIAAILAMIMANSGATSGWYHDFLETPVQLRVGSLEINKNMLLWINDALMAVFFLLVGLEVKRELMQGSLASLRQAAFPVIAAIGGMIVPALLYLAFNYADPITREGWAIPAATDIAFALGVLALLGSRVPLALKIFLMALAIIDDLGAIIIIALFYTNDLSMASLGVAAVAIAVLAVLNLCGVRRTGVYILVGVVLWTAVLKSGVHATLAGVIVGFFIPLKEKHGRSPAKRLEHVLHPWVAYLILPLFAFANAGVSLQGVTLDGLTSILPLGIIAGLLIGKPLGISLFCWLALRLKLAHLPEGTTYQQIMAVGILCGIGFTMSIFIASLAFGSVDPELINWAKLGILVGSISSAVIGYSWLRVRLRPSV.

At 1-11 (MKHLHRFFSSD) the chain is on the cytoplasmic side. A helical transmembrane segment spans residues 12–31 (ASGGIILIIAAILAMIMANS). At 32 to 58 (GATSGWYHDFLETPVQLRVGSLEINKN) the chain is on the periplasmic side. The helical transmembrane segment at 59-80 (MLLWINDALMAVFFLLVGLEVK) threads the bilayer. Over 81-96 (RELMQGSLASLRQAAF) the chain is Cytoplasmic. A helical transmembrane segment spans residues 97 to 116 (PVIAAIGGMIVPALLYLAFN). The Periplasmic portion of the chain corresponds to 117 to 122 (YADPIT). Residues 123–130 (REGWAIPA) form a helical membrane-spanning segment. The Cytoplasmic segment spans residues 131-154 (ATDIAFALGVLALLGSRVPLALKI). A helical membrane pass occupies residues 155–176 (FLMALAIIDDLGAIIIIALFYT). The Periplasmic portion of the chain corresponds to 177 to 180 (NDLS). The helical transmembrane segment at 181 to 200 (MASLGVAAVAIAVLAVLNLC) threads the bilayer. The Cytoplasmic portion of the chain corresponds to 201-204 (GVRR). Residues 205–222 (TGVYILVGVVLWTAVLKS) form a helical membrane-spanning segment. Residue Gly223 is a topological domain, periplasmic. A helical transmembrane segment spans residues 224-236 (VHATLAGVIVGFF). Topologically, residues 237–253 (IPLKEKHGRSPAKRLEH) are cytoplasmic. Residues 254 to 272 (VLHPWVAYLILPLFAFANA) form a helical membrane-spanning segment. Residues 273–286 (GVSLQGVTLDGLTS) lie on the Periplasmic side of the membrane. Residues 287-310 (ILPLGIIAGLLIGKPLGISLFCWL) form a helical membrane-spanning segment. The Cytoplasmic portion of the chain corresponds to 311–339 (ALRLKLAHLPEGTTYQQIMAVGILCGIGF). Residues 340–350 (TMSIFIASLAF) form a helical membrane-spanning segment. Residues 351–357 (GSVDPEL) are Periplasmic-facing. Residues 358–380 (INWAKLGILVGSISSAVIGYSWL) form a helical membrane-spanning segment. Residues 381-388 (RVRLRPSV) are Cytoplasmic-facing.

It belongs to the NhaA Na(+)/H(+) (TC 2.A.33) antiporter family.

It localises to the cell inner membrane. It catalyses the reaction Na(+)(in) + 2 H(+)(out) = Na(+)(out) + 2 H(+)(in). Functionally, na(+)/H(+) antiporter that extrudes sodium in exchange for external protons. In Escherichia coli O9:H4 (strain HS), this protein is Na(+)/H(+) antiporter NhaA.